The following is a 374-amino-acid chain: MKYELQKTDGRARRGRLVFERGVVETPAFMPVGTYGTVKGMTPEEVKETGAQILLGNTFHLWLRPGQEIMKLHGDLHDFMQWHGPILTDSGGFQVFSLGAMRKIKEEGVHFKNPINGDSVFLSPEKSMEIQYDLGSDIVMIFDECTPYPADWDYAKRSMEMSLRWAARSRQRFDELNNKNALFGIIQGGVYEDLRDVSVKGLVDIGFDGYAVGGLAVGEPKEDMHRILEHVCPQIPEDKPRYLMGVGKPEDLVEGVRRGIDMFDCVMPTRNARNGHLFVTDGVVKIRNAKHKDDTATLDEHCDCYTCRHYSRAYLHHLDRCNEILGARLNTIHNLRYYQRLMAGLRQAIEEGKLEHFVEDFYGRIGKPVPPLNV.

Aspartate 89 (proton acceptor) is an active-site residue. Residues 89-93, aspartate 143, glutamine 187, and glycine 214 each bind substrate; that span reads DSGGF. The RNA binding stretch occupies residues 245-251; the sequence is GVGKPED. Residue aspartate 264 is the Nucleophile of the active site. The interval 269-273 is RNA binding; important for wobble base 34 recognition; the sequence is TRNAR. Residues cysteine 302, cysteine 304, cysteine 307, and histidine 333 each coordinate Zn(2+).

Belongs to the queuine tRNA-ribosyltransferase family. As to quaternary structure, homodimer. Within each dimer, one monomer is responsible for RNA recognition and catalysis, while the other monomer binds to the replacement base PreQ1. It depends on Zn(2+) as a cofactor.

It carries out the reaction 7-aminomethyl-7-carbaguanine + guanosine(34) in tRNA = 7-aminomethyl-7-carbaguanosine(34) in tRNA + guanine. Its pathway is tRNA modification; tRNA-queuosine biosynthesis. Its function is as follows. Catalyzes the base-exchange of a guanine (G) residue with the queuine precursor 7-aminomethyl-7-deazaguanine (PreQ1) at position 34 (anticodon wobble position) in tRNAs with GU(N) anticodons (tRNA-Asp, -Asn, -His and -Tyr). Catalysis occurs through a double-displacement mechanism. The nucleophile active site attacks the C1' of nucleotide 34 to detach the guanine base from the RNA, forming a covalent enzyme-RNA intermediate. The proton acceptor active site deprotonates the incoming PreQ1, allowing a nucleophilic attack on the C1' of the ribose to form the product. After dissociation, two additional enzymatic reactions on the tRNA convert PreQ1 to queuine (Q), resulting in the hypermodified nucleoside queuosine (7-(((4,5-cis-dihydroxy-2-cyclopenten-1-yl)amino)methyl)-7-deazaguanosine). This Yersinia pseudotuberculosis serotype O:1b (strain IP 31758) protein is Queuine tRNA-ribosyltransferase.